The chain runs to 460 residues: V-type ATP synthase beta chain (460 aa).

The protein belongs to the ATPase alpha/beta chains family.

In terms of biological role, produces ATP from ADP in the presence of a proton gradient across the membrane. The V-type beta chain is a regulatory subunit. The protein is V-type ATP synthase beta chain of Acetivibrio thermocellus (strain ATCC 27405 / DSM 1237 / JCM 9322 / NBRC 103400 / NCIMB 10682 / NRRL B-4536 / VPI 7372) (Clostridium thermocellum).